Reading from the N-terminus, the 160-residue chain is FNEEGSLYILKGDRTIEFDGEFAADVLVEFLLDLIEDPVEIINSKLEVQAFERIEDHIKLIGFFKSEDSEYYKAFEEAAEHFQPYIKFFATFDKGVAKKLSLKMNEVDFYEPFMEEPIVIPDKPYTEEEIVEFVKEHQRPTLRRLRPEDMFETWEDNLNG.

This sequence belongs to the calsequestrin family. In terms of assembly, monomer, homodimer and homooligomer. Mostly monomeric in the absence of calcium. Forms higher oligomers in a calcium-dependent manner. Dimers associate to form tetramers, that then form linear homomer chains. Interacts with ASPH and TRDN. Post-translationally, phosphorylation in the C-terminus, probably by CK2, moderately increases calcium buffering capacity. N-glycosylated.

It is found in the sarcoplasmic reticulum lumen. In terms of biological role, calsequestrin is a high-capacity, moderate affinity, calcium-binding protein and thus acts as an internal calcium store in muscle. Calcium ions are bound by clusters of acidic residues at the protein surface, especially at the interface between subunits. Can bind around 60 Ca(2+) ions. Regulates the release of lumenal Ca(2+) via the calcium release channel RYR2; this plays an important role in triggering muscle contraction. Plays a role in excitation-contraction coupling in the heart and in regulating the rate of heart beats. This chain is Calsequestrin-2 (CASQ2), found in Sus scrofa (Pig).